The chain runs to 212 residues: Ribonuclease HII (212 aa).

Positions 1-204 constitute an RNase H type-2 domain; that stretch reads MRVGIDEAGR…LRSTAPLYYI (204 aa). 3 residues coordinate a divalent metal cation: Asp-6, Glu-7, and Asp-103.

The protein belongs to the RNase HII family. The cofactor is Mn(2+). Mg(2+) is required as a cofactor.

The protein localises to the cytoplasm. The enzyme catalyses Endonucleolytic cleavage to 5'-phosphomonoester.. In terms of biological role, endonuclease that specifically degrades the RNA of RNA-DNA hybrids. This chain is Ribonuclease HII, found in Saccharolobus solfataricus (strain ATCC 35092 / DSM 1617 / JCM 11322 / P2) (Sulfolobus solfataricus).